The chain runs to 323 residues: NAC transcription factor 25 (323 aa).

One can recognise an NAC domain in the interval 16 to 177 (LPPGFRFHPT…DWVLCRIYKK (162 aa)). Residues 114-183 (VGVKKALVFY…IYKKNSSQRP (70 aa)) mediate DNA binding. Low complexity predominate over residues 201-221 (KSSANSSSTSVLDNNDNNNNN). The tract at residues 201-223 (KSSANSSSTSVLDNNDNNNNNNE) is disordered.

Expressed specifically in the tapetum.

The protein resides in the nucleus. Functionally, transcription factor of the NAC family. May be associated with anther development and pollen production. Required for normal seed development and morphology. The polypeptide is NAC transcription factor 25 (NAC025) (Arabidopsis thaliana (Mouse-ear cress)).